We begin with the raw amino-acid sequence, 297 residues long: Methionyl-tRNA formyltransferase (297 aa).

Residues 31 to 52 (QPPRAAGRGQKPRPSPVHRAAE) are disordered. 108–111 (SLLP) provides a ligand contact to (6S)-5,6,7,8-tetrahydrofolate.

The protein belongs to the Fmt family.

It catalyses the reaction L-methionyl-tRNA(fMet) + (6R)-10-formyltetrahydrofolate = N-formyl-L-methionyl-tRNA(fMet) + (6S)-5,6,7,8-tetrahydrofolate + H(+). Functionally, attaches a formyl group to the free amino group of methionyl-tRNA(fMet). The formyl group appears to play a dual role in the initiator identity of N-formylmethionyl-tRNA by promoting its recognition by IF2 and preventing the misappropriation of this tRNA by the elongation apparatus. This chain is Methionyl-tRNA formyltransferase, found in Paracoccus denitrificans (strain Pd 1222).